A 357-amino-acid polypeptide reads, in one-letter code: UPF0283 membrane protein BSUIS_A1077 (357 aa).

The segment at 1-36 is disordered; it reads MSDKTPRKPTAFRLEQPARVSAASEQEEPRHPRAVK. Residues 27–36 are compositionally biased toward basic and acidic residues; that stretch reads EEPRHPRAVK. 2 helical membrane passes run 78-98 and 109-129; these read ILFG…TEDL and LGWT…AIIL.

The protein belongs to the UPF0283 family.

The protein localises to the cell inner membrane. The protein is UPF0283 membrane protein BSUIS_A1077 of Brucella suis (strain ATCC 23445 / NCTC 10510).